We begin with the raw amino-acid sequence, 1343 residues long: DNA-directed RNA polymerase subunit beta (1343 aa).

It belongs to the RNA polymerase beta chain family. The RNAP catalytic core consists of 2 alpha, 1 beta, 1 beta' and 1 omega subunit. When a sigma factor is associated with the core the holoenzyme is formed, which can initiate transcription.

The catalysed reaction is RNA(n) + a ribonucleoside 5'-triphosphate = RNA(n+1) + diphosphate. Its function is as follows. DNA-dependent RNA polymerase catalyzes the transcription of DNA into RNA using the four ribonucleoside triphosphates as substrates. This Shewanella loihica (strain ATCC BAA-1088 / PV-4) protein is DNA-directed RNA polymerase subunit beta.